The chain runs to 345 residues: MSKQSLSYKDAGVDINAGNELVERIKPHVKRTTRSEVIGGLGGFGALCALPAKYKEPVLVSGTDGVGTKLRLAIDLKKHDTIGIDLVAMCVNDLVVQGAEPLFFLDYYATGKLDVDVAADVVKGIAEGCVQSSCALVGGETAEMPGMYREGDYDLAGFCVGVVEKSKILDGSKVQAGDALIALASSGPHSNGYSLVRKVIEVAGVNPATEQLAGKPLAEQVLAPTKIYVKSVLELIEKTDVHAIAHLTGGGFWENIPRVLPENVKAVIDETSWDWQPVFKWLQEQGNITRHEMYRTFNCGVGMVLALPQAEADKALDILRAAGENAWLIGRIEALNAGEQQVIIR.

This sequence belongs to the AIR synthase family.

It is found in the cytoplasm. It catalyses the reaction 2-formamido-N(1)-(5-O-phospho-beta-D-ribosyl)acetamidine + ATP = 5-amino-1-(5-phospho-beta-D-ribosyl)imidazole + ADP + phosphate + H(+). It participates in purine metabolism; IMP biosynthesis via de novo pathway; 5-amino-1-(5-phospho-D-ribosyl)imidazole from N(2)-formyl-N(1)-(5-phospho-D-ribosyl)glycinamide: step 2/2. The sequence is that of Phosphoribosylformylglycinamidine cyclo-ligase from Actinobacillus succinogenes (strain ATCC 55618 / DSM 22257 / CCUG 43843 / 130Z).